Here is a 296-residue protein sequence, read N- to C-terminus: Light-independent protochlorophyllide reductase iron-sulfur ATP-binding protein (296 aa).

Residues 39 to 44 (GIGKST) and Lys-68 contribute to the ATP site. Ser-43 contributes to the Mg(2+) binding site. [4Fe-4S] cluster contacts are provided by Cys-124 and Cys-158. Residue 209–210 (NR) participates in ATP binding.

Belongs to the NifH/BchL/ChlL family. As to quaternary structure, homodimer. Protochlorophyllide reductase is composed of three subunits; ChlL, ChlN and ChlB. The cofactor is [4Fe-4S] cluster.

It carries out the reaction chlorophyllide a + oxidized 2[4Fe-4S]-[ferredoxin] + 2 ADP + 2 phosphate = protochlorophyllide a + reduced 2[4Fe-4S]-[ferredoxin] + 2 ATP + 2 H2O. The protein operates within porphyrin-containing compound metabolism; chlorophyll biosynthesis (light-independent). In terms of biological role, component of the dark-operative protochlorophyllide reductase (DPOR) that uses Mg-ATP and reduced ferredoxin to reduce ring D of protochlorophyllide (Pchlide) to form chlorophyllide a (Chlide). This reaction is light-independent. The L component serves as a unique electron donor to the NB-component of the complex, and binds Mg-ATP. The polypeptide is Light-independent protochlorophyllide reductase iron-sulfur ATP-binding protein (Synechococcus sp. (strain WH7803)).